Reading from the N-terminus, the 301-residue chain is Sulfate adenylyltransferase subunit 2 (301 aa).

Belongs to the PAPS reductase family. CysD subfamily. Heterodimer composed of CysD, the smaller subunit, and CysN.

The catalysed reaction is sulfate + ATP + H(+) = adenosine 5'-phosphosulfate + diphosphate. It functions in the pathway sulfur metabolism; hydrogen sulfide biosynthesis; sulfite from sulfate: step 1/3. With CysN forms the ATP sulfurylase (ATPS) that catalyzes the adenylation of sulfate producing adenosine 5'-phosphosulfate (APS) and diphosphate, the first enzymatic step in sulfur assimilation pathway. APS synthesis involves the formation of a high-energy phosphoric-sulfuric acid anhydride bond driven by GTP hydrolysis by CysN coupled to ATP hydrolysis by CysD. This chain is Sulfate adenylyltransferase subunit 2, found in Geotalea daltonii (strain DSM 22248 / JCM 15807 / FRC-32) (Geobacter daltonii).